The sequence spans 609 residues: Aspartate--tRNA(Asp/Asn) ligase (609 aa).

Glu-175 is a binding site for L-aspartate. An aspartate region spans residues 199–202; the sequence is QQFK. L-aspartate contacts are provided by Arg-221 and His-468. Residue 221–223 coordinates ATP; the sequence is RDE. Glu-502 lines the ATP pocket. Arg-509 is a binding site for L-aspartate. 554–557 is a binding site for ATP; that stretch reads GIDR.

This sequence belongs to the class-II aminoacyl-tRNA synthetase family. Type 1 subfamily. Homodimer.

Its subcellular location is the cytoplasm. The catalysed reaction is tRNA(Asx) + L-aspartate + ATP = L-aspartyl-tRNA(Asx) + AMP + diphosphate. Its function is as follows. Aspartyl-tRNA synthetase with relaxed tRNA specificity since it is able to aspartylate not only its cognate tRNA(Asp) but also tRNA(Asn). Reaction proceeds in two steps: L-aspartate is first activated by ATP to form Asp-AMP and then transferred to the acceptor end of tRNA(Asp/Asn). The polypeptide is Aspartate--tRNA(Asp/Asn) ligase (Caulobacter sp. (strain K31)).